A 229-amino-acid chain; its full sequence is Deoxyribose-phosphate aldolase (229 aa).

Residue D96 is the Proton donor/acceptor of the active site. K166 serves as the catalytic Schiff-base intermediate with acetaldehyde. K195 acts as the Proton donor/acceptor in catalysis.

It belongs to the DeoC/FbaB aldolase family. DeoC type 1 subfamily.

Its subcellular location is the cytoplasm. The enzyme catalyses 2-deoxy-D-ribose 5-phosphate = D-glyceraldehyde 3-phosphate + acetaldehyde. The protein operates within carbohydrate degradation; 2-deoxy-D-ribose 1-phosphate degradation; D-glyceraldehyde 3-phosphate and acetaldehyde from 2-deoxy-alpha-D-ribose 1-phosphate: step 2/2. Catalyzes a reversible aldol reaction between acetaldehyde and D-glyceraldehyde 3-phosphate to generate 2-deoxy-D-ribose 5-phosphate. This chain is Deoxyribose-phosphate aldolase, found in Micrococcus luteus (strain ATCC 4698 / DSM 20030 / JCM 1464 / CCM 169 / CCUG 5858 / IAM 1056 / NBRC 3333 / NCIMB 9278 / NCTC 2665 / VKM Ac-2230) (Micrococcus lysodeikticus).